A 152-amino-acid polypeptide reads, in one-letter code: Prefoldin subunit alpha (152 aa).

The interval 110-152 (ETQEEVDELESESQELEQQAQQMQQQMQQQQMQQMQQSQGDEE) is disordered. Acidic residues predominate over residues 111–124 (TQEEVDELESESQE). The segment covering 125–152 (LEQQAQQMQQQMQQQQMQQMQQSQGDEE) has biased composition (low complexity).

It belongs to the prefoldin alpha subunit family. As to quaternary structure, heterohexamer of two alpha and four beta subunits.

The protein localises to the cytoplasm. Molecular chaperone capable of stabilizing a range of proteins. Seems to fulfill an ATP-independent, HSP70-like function in archaeal de novo protein folding. The polypeptide is Prefoldin subunit alpha (Halorubrum lacusprofundi (strain ATCC 49239 / DSM 5036 / JCM 8891 / ACAM 34)).